The following is an 84-amino-acid chain: Putative membrane protein insertion efficiency factor (84 aa).

Belongs to the UPF0161 family.

It is found in the cell inner membrane. Its function is as follows. Could be involved in insertion of integral membrane proteins into the membrane. This Shewanella pealeana (strain ATCC 700345 / ANG-SQ1) protein is Putative membrane protein insertion efficiency factor.